We begin with the raw amino-acid sequence, 160 residues long: uncharacterized protein (160 aa).

It is found in the cytoplasm. The protein resides in the nucleus. This is an uncharacterized protein from Schizosaccharomyces pombe (strain 972 / ATCC 24843) (Fission yeast).